A 107-amino-acid polypeptide reads, in one-letter code: Protein TAP1 (107 aa).

An N-terminal signal peptide occupies residues 1-23; it reads MESKRVDVLVGLMLIMAIFGVHS.

As to expression, stamen.

The sequence is that of Protein TAP1 (TAP1) from Antirrhinum majus (Garden snapdragon).